Here is a 400-residue protein sequence, read N- to C-terminus: Enoyl-[acyl-carrier-protein] reductase [NADH] (400 aa).

Residues 48-53 (GASTGY), 74-75 (FE), 111-112 (DA), and 139-140 (LA) contribute to the NAD(+) site. Tyr-225 lines the substrate pocket. The active-site Proton donor is Tyr-235. Residues Lys-244 and 273–275 (VVT) contribute to the NAD(+) site.

The protein belongs to the TER reductase family. Monomer.

It catalyses the reaction a 2,3-saturated acyl-[ACP] + NAD(+) = a (2E)-enoyl-[ACP] + NADH + H(+). Its pathway is lipid metabolism; fatty acid biosynthesis. Involved in the final reduction of the elongation cycle of fatty acid synthesis (FAS II). Catalyzes the reduction of a carbon-carbon double bond in an enoyl moiety that is covalently linked to an acyl carrier protein (ACP). This chain is Enoyl-[acyl-carrier-protein] reductase [NADH], found in Burkholderia lata (strain ATCC 17760 / DSM 23089 / LMG 22485 / NCIMB 9086 / R18194 / 383).